Here is a 1589-residue protein sequence, read N- to C-terminus: Pentafunctional AROM polypeptide (1589 aa).

Residues 1-384 are 3-dehydroquinate synthase; it reads MAAPTTIKIL…HEQQASVVSN (384 aa). NAD(+) contacts are provided by residues 44–46, 81–84, 114–116, and D119; these read DTT, ELSK, and GGV. R130 is a 7-phospho-2-dehydro-3-deoxy-D-arabino-heptonate binding site. 139–140 contributes to the NAD(+) binding site; it reads TT. The 7-phospho-2-dehydro-3-deoxy-D-arabino-heptonate site is built by D146 and K152. NAD(+) is bound at residue K161. N162 lines the 7-phospho-2-dehydro-3-deoxy-D-arabino-heptonate pocket. NAD(+)-binding positions include 179-182 and N190; that span reads FLNT. E194 serves as a coordination point for Zn(2+). Residues 194–197 and K250 contribute to the 7-phospho-2-dehydro-3-deoxy-D-arabino-heptonate site; that span reads EVIK. Catalysis depends on E260, which acts as the Proton acceptor; for 3-dehydroquinate synthase activity. 7-phospho-2-dehydro-3-deoxy-D-arabino-heptonate-binding positions include 264–268 and H271; that span reads RNLLN. H271 is a binding site for Zn(2+). The Proton acceptor; for 3-dehydroquinate synthase activity role is filled by H275. Residues H287 and K356 each contribute to the 7-phospho-2-dehydro-3-deoxy-D-arabino-heptonate site. H287 serves as a coordination point for Zn(2+). The segment at 397-841 is EPSP synthase; it reads VSPGVPKSLQ…WDTLAQLFKA (445 aa). The For EPSP synthase activity role is filled by C823. The segment at 861–1052 is shikimate kinase; that stretch reads ASIFIIGMRG…KKKPQSFFVS (192 aa). 867 to 874 provides a ligand contact to ATP; that stretch reads GMRGAGKT. Residues 1053–1273 are 3-dehydroquinase; that stretch reads LTLPDLRPSA…AAPGQLSAQD (221 aa). The active-site Proton acceptor; for 3-dehydroquinate dehydratase activity is the H1176. Catalysis depends on K1204, which acts as the Schiff-base intermediate with substrate; for 3-dehydroquinate dehydratase activity. The shikimate dehydrogenase stretch occupies residues 1286–1589; it reads PRKFAIFGKP…VMNPGTDNRG (304 aa).

In the N-terminal section; belongs to the sugar phosphate cyclases superfamily. Dehydroquinate synthase family. It in the 2nd section; belongs to the EPSP synthase family. This sequence in the 3rd section; belongs to the shikimate kinase family. The protein in the 4th section; belongs to the type-I 3-dehydroquinase family. In the C-terminal section; belongs to the shikimate dehydrogenase family. In terms of assembly, homodimer. Zn(2+) is required as a cofactor.

It is found in the cytoplasm. It catalyses the reaction 7-phospho-2-dehydro-3-deoxy-D-arabino-heptonate = 3-dehydroquinate + phosphate. It carries out the reaction 3-dehydroquinate = 3-dehydroshikimate + H2O. The catalysed reaction is shikimate + NADP(+) = 3-dehydroshikimate + NADPH + H(+). The enzyme catalyses shikimate + ATP = 3-phosphoshikimate + ADP + H(+). It catalyses the reaction 3-phosphoshikimate + phosphoenolpyruvate = 5-O-(1-carboxyvinyl)-3-phosphoshikimate + phosphate. It functions in the pathway metabolic intermediate biosynthesis; chorismate biosynthesis; chorismate from D-erythrose 4-phosphate and phosphoenolpyruvate: step 2/7. Its pathway is metabolic intermediate biosynthesis; chorismate biosynthesis; chorismate from D-erythrose 4-phosphate and phosphoenolpyruvate: step 3/7. The protein operates within metabolic intermediate biosynthesis; chorismate biosynthesis; chorismate from D-erythrose 4-phosphate and phosphoenolpyruvate: step 4/7. It participates in metabolic intermediate biosynthesis; chorismate biosynthesis; chorismate from D-erythrose 4-phosphate and phosphoenolpyruvate: step 5/7. It functions in the pathway metabolic intermediate biosynthesis; chorismate biosynthesis; chorismate from D-erythrose 4-phosphate and phosphoenolpyruvate: step 6/7. In terms of biological role, the AROM polypeptide catalyzes 5 consecutive enzymatic reactions in prechorismate polyaromatic amino acid biosynthesis. This Coccidioides posadasii (strain C735) (Valley fever fungus) protein is Pentafunctional AROM polypeptide.